The following is a 625-amino-acid chain: tRNA uridine 5-carboxymethylaminomethyl modification enzyme MnmG (625 aa).

Residues 11 to 16 (GAGHAG), V123, and S178 each bind FAD. Position 271 to 285 (271 to 285 (GPRYCPSIETKIVTF)) interacts with NAD(+). Residue Q368 participates in FAD binding.

Belongs to the MnmG family. In terms of assembly, homodimer. Heterotetramer of two MnmE and two MnmG subunits. It depends on FAD as a cofactor.

The protein localises to the cytoplasm. Functionally, NAD-binding protein involved in the addition of a carboxymethylaminomethyl (cmnm) group at the wobble position (U34) of certain tRNAs, forming tRNA-cmnm(5)s(2)U34. The chain is tRNA uridine 5-carboxymethylaminomethyl modification enzyme MnmG from Bacteroides fragilis (strain ATCC 25285 / DSM 2151 / CCUG 4856 / JCM 11019 / LMG 10263 / NCTC 9343 / Onslow / VPI 2553 / EN-2).